We begin with the raw amino-acid sequence, 405 residues long: Imidazolonepropionase (405 aa).

Fe(3+) contacts are provided by H73 and H75. Residues H73 and H75 each contribute to the Zn(2+) site. Residues R82, Y145, and H178 each contribute to the 4-imidazolone-5-propanoate site. Y145 is a binding site for N-formimidoyl-L-glutamate. H243 contributes to the Fe(3+) binding site. H243 lines the Zn(2+) pocket. Q246 is a 4-imidazolone-5-propanoate binding site. Residue D318 coordinates Fe(3+). D318 lines the Zn(2+) pocket. The N-formimidoyl-L-glutamate site is built by N320 and G322. T323 contributes to the 4-imidazolone-5-propanoate binding site.

This sequence belongs to the metallo-dependent hydrolases superfamily. HutI family. Zn(2+) serves as cofactor. The cofactor is Fe(3+).

Its subcellular location is the cytoplasm. It carries out the reaction 4-imidazolone-5-propanoate + H2O = N-formimidoyl-L-glutamate. It participates in amino-acid degradation; L-histidine degradation into L-glutamate; N-formimidoyl-L-glutamate from L-histidine: step 3/3. Its function is as follows. Catalyzes the hydrolytic cleavage of the carbon-nitrogen bond in imidazolone-5-propanoate to yield N-formimidoyl-L-glutamate. It is the third step in the universal histidine degradation pathway. In Brucella anthropi (strain ATCC 49188 / DSM 6882 / CCUG 24695 / JCM 21032 / LMG 3331 / NBRC 15819 / NCTC 12168 / Alc 37) (Ochrobactrum anthropi), this protein is Imidazolonepropionase.